The primary structure comprises 97 residues: uncharacterized protein (97 aa).

It belongs to the mycobacterial PE family.

In terms of biological role, part of the ESX-1 / type VII specialized secretion system (T7SS), which exports several proteins including EsxA and EsxB. Plays a role in DNA conjugation, in at least a donor strain. This is an uncharacterized protein from Mycolicibacterium smegmatis (strain ATCC 700084 / mc(2)155) (Mycobacterium smegmatis).